The sequence spans 90 residues: Small ribosomal subunit protein bS16 (90 aa).

It belongs to the bacterial ribosomal protein bS16 family.

This is Small ribosomal subunit protein bS16 from Bacillus anthracis (strain A0248).